A 175-amino-acid chain; its full sequence is MTTIVSVRRNGKVVIAGDGQVSLGNTVMKGNARKVRRLYNNKVLAGFAGGTADAFTLFERFERKLEMHQGHLLKSAVELAKDWRTDRALRKLEAILAVADETGSLIITGNGDVVQPENDLIAIGSGGNFAQAAATALLENTDLGAREIAEKSLNIAGDICVFTNHNHTIEELETK.

Residue threonine 2 is part of the active site. Residues glycine 157, cysteine 160, and threonine 163 each contribute to the Na(+) site.

It belongs to the peptidase T1B family. HslV subfamily. A double ring-shaped homohexamer of HslV is capped on each side by a ring-shaped HslU homohexamer. The assembly of the HslU/HslV complex is dependent on binding of ATP.

Its subcellular location is the cytoplasm. The catalysed reaction is ATP-dependent cleavage of peptide bonds with broad specificity.. Its activity is regulated as follows. Allosterically activated by HslU binding. Its function is as follows. Protease subunit of a proteasome-like degradation complex believed to be a general protein degrading machinery. The chain is ATP-dependent protease subunit HslV from Photobacterium profundum (strain SS9).